The sequence spans 365 residues: Hematopoietic SH2 domain-containing protein homolog (365 aa).

The 92-residue stretch at W34 to C125 folds into the SH2 domain. 2 disordered regions span residues Q199–P278 and A335–Y365. Positions Q257 to K277 are enriched in polar residues.

Its function is as follows. May be an adapter protein involved in tyrosine kinase signaling. This chain is Hematopoietic SH2 domain-containing protein homolog (hsh2d), found in Danio rerio (Zebrafish).